Reading from the N-terminus, the 369-residue chain is MVLDITGVEKQGIILFSESELSKEFLELIWIIVSILTTIVGVTLGVLVIVWLERKISAGIQQRIGPEYAGPLGIIQALADGIKLLLKEDVIPARGDIWLFNVGPAIVVIPVFLSYLVIPFGKHIILADLGIGVFFWIAVSSIAPLGLLMAGYGSNNKYSFLGGLRAAAQSISYEIPLALCVLSISLLSNSLSTVDIVDAQSKYGLLGWNLWRQPIGFLIFFISSLAECERLPFDPPEAEEELVAGYQTEYSGIKFGLFYVGSYLNLLVSSLFVTVLYLGGWDLSIPFLPTSNQLTWILTNGTFDIINAIIGIIITLTKAYLFLFVSIMTRWTLPRVRIDQLLDLGWKFLLPVALGNLLLTASFQILLLD.

A run of 8 helical transmembrane segments spans residues 29-49, 97-117, 129-149, 167-187, 205-225, 255-275, 305-325, and 348-368; these read IWII…VLVI, IWLF…SYLV, LGIG…GLLM, AAQS…ISLL, LLGW…ISSL, FGLF…FVTV, IINA…FLFV, and FLLP…ILLL.

It belongs to the complex I subunit 1 family. In terms of assembly, NDH is composed of at least 16 different subunits, 5 of which are encoded in the nucleus.

The protein resides in the plastid. It is found in the chloroplast thylakoid membrane. It catalyses the reaction a plastoquinone + NADH + (n+1) H(+)(in) = a plastoquinol + NAD(+) + n H(+)(out). The enzyme catalyses a plastoquinone + NADPH + (n+1) H(+)(in) = a plastoquinol + NADP(+) + n H(+)(out). Its function is as follows. NDH shuttles electrons from NAD(P)H:plastoquinone, via FMN and iron-sulfur (Fe-S) centers, to quinones in the photosynthetic chain and possibly in a chloroplast respiratory chain. The immediate electron acceptor for the enzyme in this species is believed to be plastoquinone. Couples the redox reaction to proton translocation, and thus conserves the redox energy in a proton gradient. The polypeptide is NAD(P)H-quinone oxidoreductase subunit 1, chloroplastic (Angiopteris evecta (Mule's foot fern)).